Reading from the N-terminus, the 508-residue chain is Maturase K (508 aa).

Belongs to the intron maturase 2 family. MatK subfamily.

It localises to the plastid. It is found in the chloroplast. Usually encoded in the trnK tRNA gene intron. Probably assists in splicing its own and other chloroplast group II introns. The sequence is that of Maturase K from Abrus precatorius (Indian licorice).